Here is a 536-residue protein sequence, read N- to C-terminus: Transcription factor cheR (536 aa).

Positions 19-57 (CDRCHRHKLRCERSSVIVNGGVAVPLGPCKRCLKACIPC) form a DNA-binding region, zn(2)-C6 fungal-type. Disordered regions lie at residues 70–122 (AKTG…LSGT) and 220–243 (ALTDVEKASTGSSKSAPERGPREE). A compositionally biased stretch (low complexity) spans 88 to 108 (AASPAKRAPSPARRPTASTPR).

The protein localises to the nucleus. Functionally, transcription factor; part of the gene cluster that mediates the biosynthesis of chaetoglobosin A which has a unique inhibitory activity against actin polymerization in mammalian cells. Chaetoglobosin A and its intermediates are involved in the morphological differentiation of C.globosum. Binds directly to asymmetric direct repeats present in the promoters of the chaetoglobosin A cluster genes. This Chaetomium globosum (strain ATCC 6205 / CBS 148.51 / DSM 1962 / NBRC 6347 / NRRL 1970) (Soil fungus) protein is Transcription factor cheR.